The sequence spans 479 residues: Anaerobic nitric oxide reductase flavorubredoxin (479 aa).

A zinc metallo-hydrolase region spans residues 30 to 210; sequence LRGSSYNSYL…PFSRLVTPKI (181 aa). Positions 79, 81, 83, 147, 166, and 227 each coordinate Fe cation. One can recognise a Flavodoxin-like domain in the interval 254-393; the sequence is ITIFYDTMSN…LCREHGREIA (140 aa). FMN contacts are provided by residues 260 to 264 and 342 to 369; these read TMSNN and AFGS…EMSL. The 52-residue stretch at 423–474 folds into the Rubredoxin-like domain; it reads GPRMQCSVCQWIYDPAKGEPMQDVAPGTPWSEVPDNFLCPECSLGKDVFDEL. Residues cysteine 428, cysteine 431, cysteine 461, and cysteine 464 each contribute to the Fe cation site.

The protein in the N-terminal section; belongs to the zinc metallo-hydrolase group 3 family. As to quaternary structure, homotetramer. Requires Fe cation as cofactor. It depends on FMN as a cofactor.

The protein resides in the cytoplasm. Its pathway is nitrogen metabolism; nitric oxide reduction. Anaerobic nitric oxide reductase; uses NADH to detoxify nitric oxide (NO), protecting several 4Fe-4S NO-sensitive enzymes. Has at least 2 reductase partners, only one of which (NorW, flavorubredoxin reductase) has been identified. NO probably binds to the di-iron center; electrons enter from the NorW at rubredoxin and are transferred sequentially to the FMN center and the di-iron center. Also able to function as an aerobic oxygen reductase. The chain is Anaerobic nitric oxide reductase flavorubredoxin from Shigella sonnei (strain Ss046).